Reading from the N-terminus, the 903-residue chain is Valine--tRNA ligase (903 aa).

Residues 1-15 are compositionally biased toward polar residues; the sequence is MVCVTDQNNETTSQN. A disordered region spans residues 1–21; the sequence is MVCVTDQNNETTSQNRADKLP. A 'HIGH' region motif is present at residues 61-71; it reads PNVTGQLHMGH. Residues 552–556 carry the 'KMSKS' region motif; the sequence is KMSKS. Position 555 (Lys555) interacts with ATP. The stretch at 836–903 forms a coiled coil; the sequence is TVDVAAERKR…RINKRLEELA (68 aa).

Belongs to the class-I aminoacyl-tRNA synthetase family. ValS type 1 subfamily. As to quaternary structure, monomer.

The protein localises to the cytoplasm. It catalyses the reaction tRNA(Val) + L-valine + ATP = L-valyl-tRNA(Val) + AMP + diphosphate. Its function is as follows. Catalyzes the attachment of valine to tRNA(Val). As ValRS can inadvertently accommodate and process structurally similar amino acids such as threonine, to avoid such errors, it has a 'posttransfer' editing activity that hydrolyzes mischarged Thr-tRNA(Val) in a tRNA-dependent manner. This is Valine--tRNA ligase from Corynebacterium glutamicum (strain ATCC 13032 / DSM 20300 / JCM 1318 / BCRC 11384 / CCUG 27702 / LMG 3730 / NBRC 12168 / NCIMB 10025 / NRRL B-2784 / 534).